A 156-amino-acid chain; its full sequence is Large ribosomal subunit protein eL24 (156 aa).

Residues 110 to 129 (KESKAKKQETQAAKKAEKAK) are compositionally biased toward basic and acidic residues. The segment at 110-156 (KESKAKKQETQAAKKAEKAKNAANPKARVTSKQGAKGAPVKVAAKSR) is disordered. The span at 130-156 (NAANPKARVTSKQGAKGAPVKVAAKSR) shows a compositional bias: low complexity.

It belongs to the eukaryotic ribosomal protein eL24 family. Component of the large ribosomal subunit (LSU). Mature N.crassa ribosomes consist of a small (40S) and a large (60S) subunit. The 40S small subunit contains 1 molecule of ribosomal RNA (18S rRNA) and at least 32 different proteins. The large 60S subunit contains 3 rRNA molecules (26S, 5.8S and 5S rRNA) and at least 42 different proteins.

It localises to the cytoplasm. Its function is as follows. Component of the ribosome, a large ribonucleoprotein complex responsible for the synthesis of proteins in the cell. The small ribosomal subunit (SSU) binds messenger RNAs (mRNAs) and translates the encoded message by selecting cognate aminoacyl-transfer RNA (tRNA) molecules. The large subunit (LSU) contains the ribosomal catalytic site termed the peptidyl transferase center (PTC), which catalyzes the formation of peptide bonds, thereby polymerizing the amino acids delivered by tRNAs into a polypeptide chain. The nascent polypeptides leave the ribosome through a tunnel in the LSU and interact with protein factors that function in enzymatic processing, targeting, and the membrane insertion of nascent chains at the exit of the ribosomal tunnel. The polypeptide is Large ribosomal subunit protein eL24 (rpl-24) (Neurospora crassa (strain ATCC 24698 / 74-OR23-1A / CBS 708.71 / DSM 1257 / FGSC 987)).